The following is a 627-amino-acid chain: Chaperone protein DnaK (627 aa).

T197 is modified (phosphothreonine; by autocatalysis). The segment covering 598 to 611 (AYAKEQGGQQGAAD) has biased composition (low complexity). Residues 598 to 627 (AYAKEQGGQQGAADAGKKADDDDVIDAEVE) form a disordered region. A compositionally biased stretch (acidic residues) spans 618–627 (DDDVIDAEVE).

Belongs to the heat shock protein 70 family.

Functionally, acts as a chaperone. This chain is Chaperone protein DnaK, found in Sulfurovum sp. (strain NBC37-1).